Consider the following 502-residue polypeptide: Ubiquitin-like-specific protease 1A (502 aa).

Catalysis depends on residues H393, D410, and C461.

It belongs to the peptidase C48 family.

Functionally, protease that catalyzes two essential functions in the SUMO pathway: processing of full-length SUMOs to their mature forms and deconjugation of SUMO from targeted proteins. Cleaves precursors of SUM1 and SUM2, and very inefficiently of SUM3. Seems to be the only ULP1 able to cleave SUM3 precursors. Cleaves SUMO peptides better than SUMO-conjugated proteins. The polypeptide is Ubiquitin-like-specific protease 1A (ULP1A) (Arabidopsis thaliana (Mouse-ear cress)).